The sequence spans 94 residues: Small ribosomal subunit protein uS19c (94 aa).

Belongs to the universal ribosomal protein uS19 family.

Its subcellular location is the plastid. The protein resides in the chloroplast. Protein S19 forms a complex with S13 that binds strongly to the 16S ribosomal RNA. This is Small ribosomal subunit protein uS19c from Cyanidioschyzon merolae (strain NIES-3377 / 10D) (Unicellular red alga).